Here is a 338-residue protein sequence, read N- to C-terminus: DNA-directed RNA polymerase subunit alpha (338 aa).

Residues 1–234 form an alpha N-terminal domain (alpha-NTD) region; it reads MIERNWNELI…DQLQIFITFE (234 aa). An alpha C-terminal domain (alpha-CTD) region spans residues 250-338; the sequence is FNPALLKKVD…DLAKKFEDQI (89 aa).

The protein belongs to the RNA polymerase alpha chain family. In terms of assembly, homodimer. The RNAP catalytic core consists of 2 alpha, 1 beta, 1 beta' and 1 omega subunit. When a sigma factor is associated with the core the holoenzyme is formed, which can initiate transcription.

The catalysed reaction is RNA(n) + a ribonucleoside 5'-triphosphate = RNA(n+1) + diphosphate. Functionally, DNA-dependent RNA polymerase catalyzes the transcription of DNA into RNA using the four ribonucleoside triphosphates as substrates. The polypeptide is DNA-directed RNA polymerase subunit alpha (Caulobacter vibrioides (strain ATCC 19089 / CIP 103742 / CB 15) (Caulobacter crescentus)).